The chain runs to 555 residues: Protein tyrosine phosphatase-like protein egg-3 (555 aa).

Short sequence motifs (D-box) lie at residues 96 to 99 and 130 to 133; these read RILL and RDRL. One can recognise a Tyrosine-protein phosphatase domain in the interval 207–514; the sequence is FVQEFNRLDR…LFIYRVILRW (308 aa). The RXXL motif; required for cortical localization motif lies at 253–256; sequence RVKL. An RXXL motif motif is present at residues 266–269; it reads RNEL. 2 short sequence motifs (RXXL motif; required for cortical localization) span residues 509–512 and 525–528; these read RVIL and RAAL.

It belongs to the protein-tyrosine phosphatase family. In terms of assembly, part of a complex, consisting of pseudophosphatases egg-3, egg-4, egg-5 and kinase mbk-2; this complex is required for the oocyte-to-zygote transition. Interacts (via tyrosine-protein phosphatase domain) with kinase mbk-2 (via N-terminus); the interaction does not affect mbk-2 kinase activity, is enhanced by mbk-2 tyrosine phosphorylation status and requires prior binding of mbk-2 to egg-4 and egg-5. Interacts with egg-4.

Its subcellular location is the cytoplasm. The protein localises to the cell cortex. In terms of biological role, probable pseudophosphatase required for the oocyte-to-zygote transition during which it regulates the polarized dispersal of the cortical actin cytoskeleton, the synthesis of the eggshell chitin layer and the formation of the polar bodies after meiosis I and II. Acts as a scaffold to tether kinase mbk-2 and pseudophosphatases egg-4 and egg-5 to the oocyte cortex and thus restricts mbk-2 activity to the cortex during meiosis I. Regulates mbk-2 localization to cytoplasmic foci during meiosis II. Also required for chitin synthase chs-1 localization to the cell cortex of unfertilized oocytes and to cytoplasmic foci in the fertilized embryo. The polypeptide is Protein tyrosine phosphatase-like protein egg-3 (Caenorhabditis elegans).